A 25-amino-acid polypeptide reads, in one-letter code: Inorganic pyrophosphatase (25 aa).

Monomer. Mg(2+) serves as cofactor.

It catalyses the reaction diphosphate + H2O = 2 phosphate + H(+). The sequence is that of Inorganic pyrophosphatase from Cyanophora paradoxa.